Consider the following 283-residue polypeptide: Ribonuclease P protein subunit p38 (283 aa).

Position 2 is an N-acetylalanine (Ala-2). 3 positions are modified to phosphoserine: Ser-12, Ser-226, and Ser-235.

This sequence belongs to the eukaryotic ribosomal protein eL8 family. In terms of assembly, component of nuclear RNase P and RNase MRP ribonucleoproteins. RNase P consists of a catalytic RNA moiety and about 10 protein subunits; POP1, POP4, POP5, POP7, RPP14, RPP21, RPP25, RPP30, RPP38 and RPP40. Within the RNase P complex, POP1, POP7 and RPP25 form the 'finger' subcomplex, POP5, RPP14, RPP40 and homodimeric RPP30 form the 'palm' subcomplex, and RPP21, POP4 and RPP38 form the 'wrist' subcomplex. All subunits of the RNase P complex interact with the catalytic RNA. Several subunits of RNase P are also part of the RNase MRP complex. RNase MRP consists of a catalytic RNA moiety and about 8 protein subunits; POP1, POP7, RPP25, RPP30, RPP38, RPP40 and possibly also POP4 and POP5.

The protein resides in the nucleus. It localises to the nucleolus. Component of ribonuclease P, a ribonucleoprotein complex that generates mature tRNA molecules by cleaving their 5'-ends. Also a component of the MRP ribonuclease complex, which cleaves pre-rRNA sequences. This Homo sapiens (Human) protein is Ribonuclease P protein subunit p38 (RPP38).